Here is a 182-residue protein sequence, read N- to C-terminus: MSDNLTMHGTTIVTVRKGGKVVIAGDGQVSLGQTVMKGNARKVRRIGKGNVIAGFAGATADAFTLLERLEKKLEQYPDQLMRASVELAKDWRTDRYLRRLEAMMLVADKNVTLALTGTGDVLEPEEGVMAIGSGGNYALAAARALIDTDKSAEEIARKAMEIAASICVYTNSNIIVETLDAG.

Residue Thr-10 is part of the active site. Na(+) is bound by residues Ala-164, Cys-167, and Thr-170.

Belongs to the peptidase T1B family. HslV subfamily. A double ring-shaped homohexamer of HslV is capped on each side by a ring-shaped HslU homohexamer. The assembly of the HslU/HslV complex is dependent on binding of ATP.

Its subcellular location is the cytoplasm. The catalysed reaction is ATP-dependent cleavage of peptide bonds with broad specificity.. Allosterically activated by HslU binding. Its function is as follows. Protease subunit of a proteasome-like degradation complex believed to be a general protein degrading machinery. The chain is ATP-dependent protease subunit HslV from Chelativorans sp. (strain BNC1).